Consider the following 338-residue polypeptide: Rho GTPase-activating protein gacA (338 aa).

The Rho-GAP domain maps to 149 to 327 (NTLEHVEDEG…NVLSHKVAVH (179 aa)).

Its subcellular location is the cytoplasm. Rho GTPase-activating protein involved in the signal transduction pathway. This is Rho GTPase-activating protein gacA (gacA) from Dictyostelium discoideum (Social amoeba).